The primary structure comprises 231 residues: Casparian strip membrane protein 1 (231 aa).

Residues 1–69 are Cytoplasmic-facing; the sequence is MSTSETATVI…FRQSDRGSRC (69 aa). Residues 70-90 traverse the membrane as a helical segment; sequence LAFLDFLLRIAAFGPALAAAI. Over 91 to 117 the chain is Extracellular; it reads ATGTSDETLSVFTEFFQFRARFDDFPA. The helical transmembrane segment at 118 to 138 threads the bilayer; sequence FLFLMVANAIAAGYLVLSLPF. The Cytoplasmic portion of the chain corresponds to 139–152; the sequence is SAVVVLRPQATGLR. A helical membrane pass occupies residues 153–173; sequence LLLLVCDTIMIGLLTAAAAAA. The Extracellular segment spans residues 174 to 207; the sequence is AAIVELAHNGNERANWVAICMQFHGFCQRTSGAV. A helical membrane pass occupies residues 208 to 228; sequence VASFLSVFLFLLLVVLAAFAI. The Cytoplasmic segment spans residues 229–231; that stretch reads RKR.

Belongs to the Casparian strip membrane proteins (CASP) family. In terms of assembly, homodimer and heterodimers.

The protein localises to the cell membrane. Regulates membrane-cell wall junctions and localized cell wall deposition. Required for establishment of the Casparian strip membrane domain (CSD) and the subsequent formation of Casparian strips, a cell wall modification of the root endodermis that determines an apoplastic barrier between the intraorganismal apoplasm and the extraorganismal apoplasm and prevents lateral diffusion. This Brachypodium distachyon (Purple false brome) protein is Casparian strip membrane protein 1.